The sequence spans 721 residues: Choline O-acetyltransferase (721 aa).

H419 (proton acceptor) is an active-site residue. CoA is bound by residues 496-508 (GKTF…VSPD), S534, and Q656.

Belongs to the carnitine/choline acetyltransferase family. As to quaternary structure, the 54 kDa and 13 kDa chains exist as a heterodimer. In terms of processing, the N-terminus of choline O-acetyltransferase 67 kDa and 54 kDa chains are blocked.

The catalysed reaction is choline + acetyl-CoA = acetylcholine + CoA. Catalyzes the reversible synthesis of acetylcholine (ACh) from acetyl CoA and choline at cholinergic synapses. This Drosophila melanogaster (Fruit fly) protein is Choline O-acetyltransferase.